A 124-amino-acid chain; its full sequence is MPEPAKSAPKKGSKKAVTKTAGKGGKKRKRSRKESYAIYVYKVLKQVHPDTGISSKAMGIMNSFVNDIFERIAGESSRLAHYNKRSTITSREIQTAVRLLLPGELAKHAVSEGTKAVTKYTSSK.

The segment at 1 to 33 (MPEPAKSAPKKGSKKAVTKTAGKGGKKRKRSRK) is disordered. Residues Lys-6 and Lys-11 each carry the N6-acetyllysine modification. Positions 8–17 (APKKGSKKAV) are enriched in basic residues. Ser-13 carries the phosphoserine modification. N6-acetyllysine is present on residues Lys-14 and Lys-19. An O-linked (GlcNAc) serine glycan is attached at Ser-111. Lys-119 is covalently cross-linked (Glycyl lysine isopeptide (Lys-Gly) (interchain with G-Cter in ubiquitin)).

It belongs to the histone H2B family. As to quaternary structure, the nucleosome is a histone octamer containing two molecules each of H2A, H2B, H3 and H4 assembled in one H3-H4 heterotetramer and two H2A-H2B heterodimers. The octamer wraps approximately 147 bp of DNA. In terms of processing, monoubiquitination of Lys-119 by BRE1 gives a specific tag for epigenetic transcriptional activation and is also prerequisite for histone H3 'Lys-4' and 'Lys-79' methylation. Phosphorylated during apoptosis; which facilitates apoptotic chromatin condensation. Post-translationally, glcNAcylation at Ser-111 promotes monoubiquitination of Lys-119. It fluctuates in response to extracellular glucose, and associates with transcribed genes.

The protein localises to the nucleus. It localises to the chromosome. Functionally, core component of nucleosome. Nucleosomes wrap and compact DNA into chromatin, limiting DNA accessibility to the cellular machineries which require DNA as a template. Histones thereby play a central role in transcription regulation, DNA repair, DNA replication and chromosomal stability. DNA accessibility is regulated via a complex set of post-translational modifications of histones, also called histone code, and nucleosome remodeling. The protein is Histone H2B of Oncorhynchus mykiss (Rainbow trout).